The chain runs to 179 residues: Bifunctional protein PyrR (179 aa).

The PRPP-binding signature appears at Val-100–Thr-112.

Belongs to the purine/pyrimidine phosphoribosyltransferase family. PyrR subfamily.

It catalyses the reaction UMP + diphosphate = 5-phospho-alpha-D-ribose 1-diphosphate + uracil. Functionally, regulates the transcription of the pyrimidine nucleotide (pyr) operon in response to exogenous pyrimidines. Also displays a weak uracil phosphoribosyltransferase activity which is not physiologically significant. The polypeptide is Bifunctional protein PyrR (Haemophilus influenzae (strain 86-028NP)).